The following is a 70-amino-acid chain: Large ribosomal subunit protein bL31 (70 aa).

Residues Cys-16, Cys-18, Cys-38, and Cys-41 each coordinate Zn(2+).

Belongs to the bacterial ribosomal protein bL31 family. Type A subfamily. In terms of assembly, part of the 50S ribosomal subunit. Requires Zn(2+) as cofactor.

Binds the 23S rRNA. The sequence is that of Large ribosomal subunit protein bL31 from Vesicomyosocius okutanii subsp. Calyptogena okutanii (strain HA).